We begin with the raw amino-acid sequence, 447 residues long: Cytochrome P450 BJ-4 homolog (447 aa).

Cys392 provides a ligand contact to heme.

The protein belongs to the cytochrome P450 family. It depends on heme as a cofactor.

In terms of biological role, cytochromes P450 are a group of heme-thiolate monooxygenases. They oxidize a variety of structurally unrelated compounds, including steroids, fatty acids, and xenobiotics. This Sinorhizobium fredii (strain NBRC 101917 / NGR234) protein is Cytochrome P450 BJ-4 homolog (cyp117A2).